A 506-amino-acid polypeptide reads, in one-letter code: Lysine--tRNA ligase (506 aa).

The Mg(2+) site is built by Glu-416 and Glu-423.

The protein belongs to the class-II aminoacyl-tRNA synthetase family. Homodimer. Mg(2+) serves as cofactor.

The protein localises to the cytoplasm. The enzyme catalyses tRNA(Lys) + L-lysine + ATP = L-lysyl-tRNA(Lys) + AMP + diphosphate. The chain is Lysine--tRNA ligase from Pelotomaculum thermopropionicum (strain DSM 13744 / JCM 10971 / SI).